We begin with the raw amino-acid sequence, 60 residues long: Large ribosomal subunit protein bL32 (60 aa).

Basic residues predominate over residues 1–23 (MAKHPVPKKKTSKSKRDMRRSHH). The tract at residues 1 to 26 (MAKHPVPKKKTSKSKRDMRRSHHALT) is disordered.

This sequence belongs to the bacterial ribosomal protein bL32 family.

The protein is Large ribosomal subunit protein bL32 of Deinococcus deserti (strain DSM 17065 / CIP 109153 / LMG 22923 / VCD115).